Here is a 65-residue protein sequence, read N- to C-terminus: MDTRLMDLLVCPICKGPLTHDHSSHELHCAADRLAFPIRDGIPVMLESEARALDESPSQAAPLSE.

It belongs to the UPF0434 family.

This chain is UPF0434 protein Mpe_A2486, found in Methylibium petroleiphilum (strain ATCC BAA-1232 / LMG 22953 / PM1).